The sequence spans 195 residues: N-(5'-phosphoribosyl)anthranilate isomerase (195 aa).

Belongs to the TrpF family.

The catalysed reaction is N-(5-phospho-beta-D-ribosyl)anthranilate = 1-(2-carboxyphenylamino)-1-deoxy-D-ribulose 5-phosphate. The protein operates within amino-acid biosynthesis; L-tryptophan biosynthesis; L-tryptophan from chorismate: step 3/5. The chain is N-(5'-phosphoribosyl)anthranilate isomerase from Streptococcus gordonii (strain Challis / ATCC 35105 / BCRC 15272 / CH1 / DL1 / V288).